The sequence spans 464 residues: Chromosomal replication initiator protein DnaA (464 aa).

The domain I, interacts with DnaA modulators stretch occupies residues 1–82 (MSLSLWQQCL…LLRFEVGSKP (82 aa)). A domain II region spans residues 82 to 127 (PITQVISQTVTASVSSAPAAPAARTAAPSRPSWDNAAAQPELSYRS). Positions 98-113 (APAAPAARTAAPSRPS) are enriched in low complexity. Residues 98 to 117 (APAAPAARTAAPSRPSWDNA) form a disordered region. Residues 128-344 (NVNPKHTFDN…GALNRVIANA (217 aa)) are domain III, AAA+ region. The ATP site is built by Gly-172, Gly-174, Lys-175, and Thr-176. The domain IV, binds dsDNA stretch occupies residues 345–464 (NFTGRAITID…FSNLIRTLSS (120 aa)).

Belongs to the DnaA family. In terms of assembly, oligomerizes as a right-handed, spiral filament on DNA at oriC.

The protein resides in the cytoplasm. Functionally, plays an important role in the initiation and regulation of chromosomal replication. Binds to the origin of replication; it binds specifically double-stranded DNA at a 9 bp consensus (dnaA box): 5'-TTATC[CA]A[CA]A-3'. DnaA binds to ATP and to acidic phospholipids. DnaA can inhibit its own gene expression as well as that of other genes. In terms of biological role, plays an essential role in the initiation and regulation of chromosomal replication. ATP-DnaA binds to the origin of replication (oriC) to initiate formation of the DNA replication initiation complex once per cell cycle. Binds the DnaA box (a 9 base pair repeat at the origin) and separates the double-stranded (ds)DNA. Forms a right-handed helical filament on oriC DNA; dsDNA binds to the exterior of the filament while single-stranded (ss)DNA is stabiized in the filament's interior. The ATP-DnaA-oriC complex binds and stabilizes one strand of the AT-rich DNA unwinding element (DUE), permitting loading of DNA polymerase. After initiation quickly degrades to an ADP-DnaA complex that is not apt for DNA replication. Binds acidic phospholipids. The sequence is that of Chromosomal replication initiator protein DnaA from Serratia marcescens.